The sequence spans 168 residues: Large ribosomal subunit protein uL10 (168 aa).

This sequence belongs to the universal ribosomal protein uL10 family. Part of the ribosomal stalk of the 50S ribosomal subunit. The N-terminus interacts with L11 and the large rRNA to form the base of the stalk. The C-terminus forms an elongated spine to which L12 dimers bind in a sequential fashion forming a multimeric L10(L12)X complex.

Its function is as follows. Forms part of the ribosomal stalk, playing a central role in the interaction of the ribosome with GTP-bound translation factors. This is Large ribosomal subunit protein uL10 from Acinetobacter baumannii (strain AB307-0294).